Consider the following 482-residue polypeptide: Membrane-bound lytic murein transglycosylase F (482 aa).

A signal peptide spans 1 to 18 (MKGLFIRIVLAICLSLWA). Residues 19 to 266 (IDMVFPWQQI…RIEEKYFNHL (248 aa)) are non-LT domain. The LT domain stretch occupies residues 267–482 (NQFDYVDTRS…ISTQTQQEQR (216 aa)). The active site involves glutamate 311.

The protein in the N-terminal section; belongs to the bacterial solute-binding protein 3 family. This sequence in the C-terminal section; belongs to the transglycosylase Slt family.

It is found in the cell outer membrane. The enzyme catalyses Exolytic cleavage of the (1-&gt;4)-beta-glycosidic linkage between N-acetylmuramic acid (MurNAc) and N-acetylglucosamine (GlcNAc) residues in peptidoglycan, from either the reducing or the non-reducing ends of the peptidoglycan chains, with concomitant formation of a 1,6-anhydrobond in the MurNAc residue.. Its function is as follows. Murein-degrading enzyme that degrades murein glycan strands and insoluble, high-molecular weight murein sacculi, with the concomitant formation of a 1,6-anhydromuramoyl product. Lytic transglycosylases (LTs) play an integral role in the metabolism of the peptidoglycan (PG) sacculus. Their lytic action creates space within the PG sacculus to allow for its expansion as well as for the insertion of various structures such as secretion systems and flagella. The chain is Membrane-bound lytic murein transglycosylase F from Histophilus somni (strain 129Pt) (Haemophilus somnus).